Consider the following 583-residue polypeptide: Aspartate--tRNA ligase (583 aa).

Glu-174 contributes to the L-aspartate binding site. The aspartate stretch occupies residues 198 to 201; sequence QITK. Arg-220 contributes to the L-aspartate binding site. ATP-binding positions include 220–222 and Gln-229; that span reads RDE. Residue His-443 participates in L-aspartate binding. Glu-477 lines the ATP pocket. Arg-484 provides a ligand contact to L-aspartate. 529–532 lines the ATP pocket; the sequence is GLDR.

It belongs to the class-II aminoacyl-tRNA synthetase family. Type 1 subfamily. In terms of assembly, homodimer.

It localises to the cytoplasm. The enzyme catalyses tRNA(Asp) + L-aspartate + ATP = L-aspartyl-tRNA(Asp) + AMP + diphosphate. Its function is as follows. Catalyzes the attachment of L-aspartate to tRNA(Asp) in a two-step reaction: L-aspartate is first activated by ATP to form Asp-AMP and then transferred to the acceptor end of tRNA(Asp). The sequence is that of Aspartate--tRNA ligase from Streptococcus suis (strain 98HAH33).